Reading from the N-terminus, the 320-residue chain is Acyl-coenzyme A thioesterase 8 (320 aa).

Active-site charge relay system residues include Asp233, Ser255, and Gln305. The Microbody targeting signal motif lies at 318–320 (SKL).

Belongs to the C/M/P thioester hydrolase family. Homodimer. Ubiquitous.

The protein localises to the peroxisome matrix. The catalysed reaction is choloyl-CoA + H2O = cholate + CoA + H(+). It catalyses the reaction chenodeoxycholoyl-CoA + H2O = chenodeoxycholate + CoA + H(+). It carries out the reaction acetyl-CoA + H2O = acetate + CoA + H(+). The enzyme catalyses malonyl-CoA + H2O = malonate + CoA + H(+). The catalysed reaction is acetoacetyl-CoA + H2O = acetoacetate + CoA + H(+). It catalyses the reaction propanoyl-CoA + H2O = propanoate + CoA + H(+). It carries out the reaction butanoyl-CoA + H2O = butanoate + CoA + H(+). The enzyme catalyses succinyl-CoA + H2O = succinate + CoA + H(+). The catalysed reaction is glutaryl-CoA + H2O = glutarate + CoA + H(+). It catalyses the reaction hexanoyl-CoA + H2O = hexanoate + CoA + H(+). It carries out the reaction hexanedioyl-CoA + H2O = hexanedioate + CoA + H(+). The enzyme catalyses octanoyl-CoA + H2O = octanoate + CoA + H(+). The catalysed reaction is octanedioyl-CoA + H2O = octanedioate + CoA + H(+). It catalyses the reaction decanoyl-CoA + H2O = decanoate + CoA + H(+). It carries out the reaction decanedioyl-CoA + H2O = decanedioate + CoA + H(+). The enzyme catalyses dodecanoyl-CoA + H2O = dodecanoate + CoA + H(+). The catalysed reaction is dodecanedioyl-CoA + H2O = dodecanedioate + CoA + H(+). It catalyses the reaction tetradecanoyl-CoA + H2O = tetradecanoate + CoA + H(+). It carries out the reaction (9Z)-tetradecenoyl-CoA + H2O = (9Z)-tetradecenoate + CoA + H(+). The enzyme catalyses hexadecanoyl-CoA + H2O = hexadecanoate + CoA + H(+). The catalysed reaction is (9Z)-hexadecenoyl-CoA + H2O = (9Z)-hexadecenoate + CoA + H(+). It catalyses the reaction octadecanoyl-CoA + H2O = octadecanoate + CoA + H(+). It carries out the reaction (9Z)-octadecenoyl-CoA + H2O = (9Z)-octadecenoate + CoA + H(+). The enzyme catalyses (9Z,12Z)-octadecadienoyl-CoA + H2O = (9Z,12Z)-octadecadienoate + CoA + H(+). The catalysed reaction is eicosanoyl-CoA + H2O = eicosanoate + CoA + H(+). It catalyses the reaction (5Z,8Z,11Z,14Z)-eicosatetraenoyl-CoA + H2O = (5Z,8Z,11Z,14Z)-eicosatetraenoate + CoA + H(+). It carries out the reaction 4,8-dimethylnonanoyl-CoA + H2O = 4,8-dimethylnonanoate + CoA + H(+). The enzyme catalyses 2,6-dimethylheptanoyl-CoA + H2O = 2,6-dimethylheptanoate + CoA + H(+). The catalysed reaction is (3S)-3-hydroxy-3-methylglutaryl-CoA + H2O = 3-hydroxy-3-methylglutarate + CoA + H(+). It catalyses the reaction 3alpha,7alpha,12alpha-trihydroxy-5beta-cholestan-26-oyl-CoA + H2O = 3alpha,7alpha,12alpha-trihydroxy-5beta-cholestan-26-oate + CoA + H(+). It carries out the reaction 2-methyloctadecanoyl-CoA + H2O = 2-methyloctadecanoate + CoA + H(+). The enzyme catalyses prostaglandin F2alpha-CoA + H2O = prostaglandin F2alpha + CoA + H(+). It participates in lipid metabolism; fatty acid metabolism. Inhibited by CoASH (IC(50)=10-15 uM). Also inhibited by cysteine-reactive agents. Functionally, catalyzes the hydrolysis of acyl-CoAs into free fatty acids and coenzyme A (CoASH), regulating their respective intracellular levels. Displays no strong substrate specificity with respect to the carboxylic acid moiety of Acyl-CoAs. Hydrolyzes medium length (C2 to C20) straight-chain, saturated and unsaturated acyl-CoAS but is inactive towards substrates with longer aliphatic chains. Moreover, it catalyzes the hydrolysis of CoA esters of bile acids, such as choloyl-CoA and chenodeoxycholoyl-CoA and competes with bile acid CoA:amino acid N-acyltransferase (BAAT). Is also able to hydrolyze CoA esters of dicarboxylic acids. It is involved in the metabolic regulation of peroxisome proliferation. In Mus musculus (Mouse), this protein is Acyl-coenzyme A thioesterase 8 (Acot8).